The sequence spans 141 residues: Protein E6 (141 aa).

Zinc fingers lie at residues 27–64 and 101–137; these read CRFC…CSSC and CKFC…CRHC.

Belongs to the papillomaviridae E6 protein family. Forms homodimers. Interacts with ubiquitin-protein ligase UBE3A/E6-AP; this interaction stimulates UBE3A ubiquitin activity. Interacts with host BAK1.

Its subcellular location is the host cytoplasm. It is found in the host nucleus. Functionally, plays a major role in the induction and maintenance of cellular transformation. E6 associates with host UBE3A/E6-AP ubiquitin-protein ligase and modulates its activity. Protects host keratinocytes from apoptosis by mediating the degradation of host BAK1. May also inhibit host immune response. The sequence is that of Protein E6 from Human papillomavirus 17.